The chain runs to 429 residues: Glutamate-1-semialdehyde 2,1-aminomutase 2 (429 aa).

N6-(pyridoxal phosphate)lysine is present on Lys268.

It belongs to the class-III pyridoxal-phosphate-dependent aminotransferase family. HemL subfamily. In terms of assembly, homodimer. It depends on pyridoxal 5'-phosphate as a cofactor.

It is found in the cytoplasm. It catalyses the reaction (S)-4-amino-5-oxopentanoate = 5-aminolevulinate. It participates in porphyrin-containing compound metabolism; protoporphyrin-IX biosynthesis; 5-aminolevulinate from L-glutamyl-tRNA(Glu): step 2/2. The protein is Glutamate-1-semialdehyde 2,1-aminomutase 2 of Staphylococcus aureus (strain MSSA476).